Reading from the N-terminus, the 134-residue chain is Ribosome-binding factor A (134 aa).

The protein belongs to the RbfA family. In terms of assembly, monomer. Binds 30S ribosomal subunits, but not 50S ribosomal subunits or 70S ribosomes.

Its subcellular location is the cytoplasm. Functionally, one of several proteins that assist in the late maturation steps of the functional core of the 30S ribosomal subunit. Associates with free 30S ribosomal subunits (but not with 30S subunits that are part of 70S ribosomes or polysomes). Required for efficient processing of 16S rRNA. May interact with the 5'-terminal helix region of 16S rRNA. The polypeptide is Ribosome-binding factor A (Bartonella bacilliformis (strain ATCC 35685 / KC583 / Herrer 020/F12,63)).